The primary structure comprises 160 residues: Endoplasmic reticulum transmembrane protein 2 (160 aa).

At 1-2 the chain is on the lumenal side; it reads MG. The chain crosses the membrane as a helical span at residues 3-23; sequence VYLAVLFSLLVIEMAILFILV. Residues 24 to 45 are Cytoplasmic-facing; that stretch reads LPLPQRMRRWLYIRYSIISTNK. Residues 46-66 traverse the membrane as a helical segment; the sequence is KFRTYMVGIMIFVGLLFIDSW. Residues 67-103 lie on the Lumenal side of the membrane; the sequence is KRSQIRVSTYRNQKNPYIINSVTPVDALASRAYNQRN. The helical transmembrane segment at 104–124 threads the bilayer; the sequence is VYISGFIIYFYICILTVMSIL. Over 125–160 the chain is Cytoplasmic; it reads RRIVEWNDKMKAGDDILKEKLRRKQKYLEELQKKKF. Positions 157-160 match the Di-lysine motif motif; sequence KKKF.

The protein belongs to the BCAP29/BCAP31 family.

It is found in the endoplasmic reticulum membrane. May play a role in anterograde transport of membrane proteins from the endoplasmic reticulum to the Golgi. The polypeptide is Endoplasmic reticulum transmembrane protein 2 (YET2) (Saccharomyces cerevisiae (strain ATCC 204508 / S288c) (Baker's yeast)).